The primary structure comprises 540 residues: Patellin-4 (540 aa).

A Phosphoserine modification is found at serine 53. The stretch at 61–183 (FADLKESEKK…EKKTEDVVTE (123 aa)) forms a coiled coil. Positions 89-140 (LKTKKKESSPMKEKKEEVVKPEAEVEKKKEEAAEEKVEEEKKSEAVVTEEAP) are disordered. Residues 94 to 140 (KESSPMKEKKEEVVKPEAEVEKKKEEAAEEKVEEEKKSEAVVTEEAP) are compositionally biased toward basic and acidic residues. Lysine 249 participates in a covalent cross-link: Glycyl lysine isopeptide (Lys-Gly) (interchain with G-Cter in ubiquitin). A CRAL-TRIO domain is found at 258–428 (GEEFGEDLAT…QYGGFKTVDD (171 aa)). Residues 433 to 534 (NETVSEVVVK…KKKVLYRYRT (102 aa)) enclose the GOLD domain.

The protein belongs to the patellin family.

The protein resides in the membrane. Its subcellular location is the cytoplasm. Functionally, carrier protein that may be involved in membrane-trafficking events associated with cell plate formation during cytokinesis. Binds to some hydrophobic molecules such as phosphoinositides and promotes their transfer between the different cellular sites. The polypeptide is Patellin-4 (PATL4) (Arabidopsis thaliana (Mouse-ear cress)).